The chain runs to 85 residues: N.vectensis toxin 1 5 (85 aa).

Residues 1-20 form the signal peptide; that stretch reads MASFKIVIVCLALLVAVACA. Positions 21-36 are excised as a propeptide; sequence RRRDMMSDDELDFHLS. 3 disulfide bridges follow: Cys-42/Cys-82, Cys-44/Cys-72, and Cys-65/Cys-83.

Belongs to the sea anemone sodium channel inhibitory toxin family. Type II subfamily. Expressed in ectodermal glands and in clumps outside of the extodermal layer. Is not expressed in nematocytes. In adult female tissues, shows similar expression levels in mesenteries (gametes-producing tissue), tentacles, pharynx and physa.

It is found in the secreted. Binds to site 3 of voltage-gated sodium channels and inhibits the inactivation process. Is highly active on DmNav1/TipE (drosophila) and is only extremely weakly active on rat Nav1.4-beta-1/SCN4A-SCN1B, and on human Nav1.5-beta-1/SCN5A-beta-1. This reveals high specificity for arthropod over mammalian channels. In vivo, when released into the medium, this recombinant toxin induces impaired swimming, paralysis and death of the crustacean A.nauplii within several hours. Also causes paralysis of cherry shrimps immediately after injection at very low doses. Its effect on zebrafish (D.rerio) larvae is also rapid, since it induces tail twitching accompanied by impaired swimming after 20 minutes and complete paralysis within 45 minutes. It has also been observed to cause death of zebrafish larvae within 1 hour. The chain is N.vectensis toxin 1 5 from Nematostella vectensis (Starlet sea anemone).